Reading from the N-terminus, the 172-residue chain is Small ribosomal subunit protein uS5 (172 aa).

Residues Leu17–Val80 enclose the S5 DRBM domain.

This sequence belongs to the universal ribosomal protein uS5 family. As to quaternary structure, part of the 30S ribosomal subunit. Contacts proteins S4 and S8.

In terms of biological role, with S4 and S12 plays an important role in translational accuracy. Its function is as follows. Located at the back of the 30S subunit body where it stabilizes the conformation of the head with respect to the body. In Paraburkholderia xenovorans (strain LB400), this protein is Small ribosomal subunit protein uS5.